The sequence spans 157 residues: uncharacterized protein (157 aa).

Residues 9 to 147 (LLINYKTLDE…DFYVWHPEVN (139 aa)) enclose the N-acetyltransferase domain.

This is an uncharacterized protein from Bacillus cereus (strain 03BB102).